Reading from the N-terminus, the 712-residue chain is Zinc finger and BTB domain-containing protein 39 (712 aa).

One can recognise a BTB domain in the interval 30–96; that stretch reads CDVTIVVGSR…VYTSELFTDL (67 aa). Disordered regions lie at residues 129–162, 176–224, and 236–260; these read ARAK…LRGG, SDAG…IPSM, and GIQT…KNSF. Positions 134–147 are enriched in polar residues; the sequence is LTSTSESHSGTLSC. Residue Lys-183 forms a Glycyl lysine isopeptide (Lys-Gly) (interchain with G-Cter in SUMO2) linkage. The C2H2-type 1 zinc-finger motif lies at 372 to 394; the sequence is GNCKVCETHFQDRNSRVTHVLSH. A C2H2-type 2; atypical zinc finger spans residues 400-422; the sequence is FSCDMCETKFFTQWQLTLHRRDG. A Glycyl lysine isopeptide (Lys-Gly) (interchain with G-Cter in SUMO2) cross-link involves residue Lys-439. The segment at 480-502 adopts a C2H2-type 3; atypical zinc-finger fold; sequence QACSVCDQRHLNLCSLMWHTLSH. 4 C2H2-type zinc fingers span residues 508–530, 538–560, 605–627, and 633–655; these read FSCS…MAVH, FHCR…VSQH, YSCK…RRIH, and YQCK…LKTH. A C2H2-type 8; atypical zinc finger spans residues 661–683; that stretch reads YRCTVCGHYSSTLNLMSKHVGVH.

This sequence belongs to the krueppel C2H2-type zinc-finger protein family.

It localises to the nucleus. Its function is as follows. May be involved in transcriptional regulation. This Homo sapiens (Human) protein is Zinc finger and BTB domain-containing protein 39 (ZBTB39).